The chain runs to 286 residues: Transcription factor bHLH137 (286 aa).

Positions 63–84 (SGSEKLANTTKTATTGSSSCDQ) are enriched in polar residues. Positions 63–149 (SGSEKLANTT…RGQATDSHSL (87 aa)) are disordered. Residues 142–192 (QATDSHSLAERVRREKISERMRTLQNLVPGCDKVTGKALMLDEIINYVQTL) form the bHLH domain.

In terms of assembly, homodimer.

It localises to the nucleus. The protein is Transcription factor bHLH137 (BHLH137) of Arabidopsis thaliana (Mouse-ear cress).